The sequence spans 427 residues: Trigger factor (427 aa).

Residues 163–248 enclose the PPIase FKBP-type domain; that stretch reads GDTVVIDFVG…VHEVKAKEVP (86 aa).

It belongs to the FKBP-type PPIase family. Tig subfamily.

Its subcellular location is the cytoplasm. The enzyme catalyses [protein]-peptidylproline (omega=180) = [protein]-peptidylproline (omega=0). In terms of biological role, involved in protein export. Acts as a chaperone by maintaining the newly synthesized protein in an open conformation. Functions as a peptidyl-prolyl cis-trans isomerase. The chain is Trigger factor from Streptococcus equi subsp. zooepidemicus (strain H70).